We begin with the raw amino-acid sequence, 201 residues long: Glycerol-3-phosphate acyltransferase (201 aa).

The next 5 membrane-spanning stretches (helical) occupy residues 3–23, 53–73, 80–100, 115–135, and 153–175; these read LFAIFYLFLAYLLGSVSSAIL, WVALSVLLFDMLKGMLPVWLG, HFELGMVALGACLGHIFPIFF, IAPISWGVAGSMLGTWLLIFF, and FYVWWFKPEFTFPVALVCCLLIY.

This sequence belongs to the PlsY family. In terms of assembly, probably interacts with PlsX.

The protein localises to the cell inner membrane. The catalysed reaction is an acyl phosphate + sn-glycerol 3-phosphate = a 1-acyl-sn-glycero-3-phosphate + phosphate. It functions in the pathway lipid metabolism; phospholipid metabolism. Its function is as follows. Catalyzes the transfer of an acyl group from acyl-phosphate (acyl-PO(4)) to glycerol-3-phosphate (G3P) to form lysophosphatidic acid (LPA). This enzyme utilizes acyl-phosphate as fatty acyl donor, but not acyl-CoA or acyl-ACP. This Pasteurella multocida (strain Pm70) protein is Glycerol-3-phosphate acyltransferase.